A 453-amino-acid chain; its full sequence is Probable L-galactonate transporter (453 aa).

A disordered region spans residues 1–23; it reads MEKENITIDPRSSFTPSSSADIP. The Periplasmic segment spans residues 1-42; that stretch reads MEKENITIDPRSSFTPSSSADIPVPPDGLVQRSTRIKRIQTT. A compositionally biased stretch (polar residues) spans 10–20; it reads PRSSFTPSSSA. Residues 43 to 63 form a helical membrane-spanning segment; it reads AMLLLFFAAVINYLDRSSLSV. Residues 64–71 lie on the Cytoplasmic side of the membrane; that stretch reads ANLTIREE. The helical transmembrane segment at 72–92 threads the bilayer; it reads LGLSATEIGALLSVFSLAYGI. The Periplasmic segment spans residues 93 to 107; it reads AQLPCGPLLDRKGPR. Residues 108–128 traverse the membrane as a helical segment; the sequence is LMLGLGMFFWSLFQAMSGMVH. At 129 to 174 the chain is on the cytoplasmic side; sequence NFTQFVLVRIGMGIGEAPMNPCGVKVINDWFNIKERGRPMGFFNAA. A helical membrane pass occupies residues 175 to 195; the sequence is STIGVAVSPPILAAMMLVMGW. Residue R196 is a topological domain, periplasmic. A helical membrane pass occupies residues 197–217; the sequence is GMFITIGVLGIFLAIGWYMLY. Over 218–259 the chain is Cytoplasmic; the sequence is RNREHVELTAVEQAYLNAGSVNARRDPLSFAEWRSLFRNRTM. Residues 260–280 traverse the membrane as a helical segment; it reads WGMMLGFSGINYTAWLYLAWL. The Periplasmic portion of the chain corresponds to 281–295; it reads PGYLQTAYNLDLKST. A helical membrane pass occupies residues 296–316; sequence GLMAAIPFLFGAAGMLVNGYV. The Cytoplasmic segment spans residues 317–332; it reads TDWLVKGGMAPIKSRK. The helical transmembrane segment at 333–353 threads the bilayer; sequence ICIIAGMFCSAAFTLIVPQAT. Residues 354 to 359 lie on the Periplasmic side of the membrane; sequence TSMTAV. A helical membrane pass occupies residues 360 to 380; sequence LLIGMALFCIHFAGTSCWGLI. Topologically, residues 381 to 394 are cytoplasmic; the sequence is HVAVASRMTASVGS. Residues 395-415 form a helical membrane-spanning segment; it reads IQNFASFICASFAPIITGFIV. The Periplasmic segment spans residues 416-422; the sequence is DTTHSFR. The chain crosses the membrane as a helical span at residues 423–443; sequence LALIICGCVTAAGALAYIFLV. The Cytoplasmic portion of the chain corresponds to 444 to 453; it reads RQPINDPRKD.

The protein belongs to the major facilitator superfamily. Phthalate permease family.

The protein resides in the cell inner membrane. It catalyses the reaction L-galactonate(in) + H(+)(in) = L-galactonate(out) + H(+)(out). Its function is as follows. Probably responsible for the transport of L-galactonate from the periplasm across the inner membrane. Is essential for growth on L-galactonate as the sole carbon source. The sequence is that of Probable L-galactonate transporter (lgoT) from Escherichia coli (strain K12).